The following is a 427-amino-acid chain: ATP-dependent RNA helicase DDX39A (427 aa).

The segment covering 1-19 (MAEQDVENELLDYDEDEEP) has biased composition (acidic residues). Residues 1–35 (MAEQDVENELLDYDEDEEPQVPQESTPAPPKKDVK) form a disordered region. A2 carries the post-translational modification N-acetylalanine. A Glycyl lysine isopeptide (Lys-Gly) (interchain with G-Cter in SUMO2) cross-link involves residue K31. Residue K35 is modified to N6-acetyllysine; alternate. K35 is covalently cross-linked (Glycyl lysine isopeptide (Lys-Gly) (interchain with G-Cter in SUMO2); alternate). Position 37 is a phosphoserine (S37). The Q motif motif lies at 44 to 72 (SGFRDFLLKPELLRAIVDCGFEHPSEVQH). A Helicase ATP-binding domain is found at 75–248 (IPQAILGMDV…RKFMQDPMEV (174 aa)). 88 to 95 (AKSGMGKT) is a binding site for ATP. Residues K154 and K162 each participate in a glycyl lysine isopeptide (Lys-Gly) (interchain with G-Cter in SUMO2) cross-link. Phosphothreonine is present on T171. The short motif at 195 to 198 (DECD) is the DECD box element. Residues K240 and K255 each participate in a glycyl lysine isopeptide (Lys-Gly) (interchain with G-Cter in SUMO2) cross-link. The region spanning 260–421 (GLQQYYVKLK…ELPEEIDIST (162 aa)) is the Helicase C-terminal domain. S426 is subject to Phosphoserine.

Belongs to the DEAD box helicase family. DECD subfamily. Binds ALYREF/THOC4 and DDX39B/BAT1. Interacts with the apo-AREX complex component SARNP. Interacts with MX1. Interacts with MCM3AP isoform GANP. Interacts with ECD. Interacts with PHAX; this interaction stimulates PHAX RNA binding activity. SUMOylated by RANBP2; SUMOylation modification affects its ability to bind RNA.

The protein resides in the nucleus. Its subcellular location is the cytoplasm. It carries out the reaction ATP + H2O = ADP + phosphate + H(+). Helicase that plays an essential role in mRNA export and is involved in multiple steps in RNA metabolism including alternative splicing. Regulates nuclear mRNA export to the cytoplasm through association with ECD. Also involved in spliceosomal uridine-rich small nuclear RNA (U snRNA) export by stimulating the RNA binding of adapter PHAX. Plays a role in the negative regulation of type I IFN production by increasing the nuclear retention of antiviral transcripts and thus reducing their protein expression. Independently of the interferon pathway, plays an antiviral role against alphaviruses by binding to a 5' conserved sequence element in the viral genomic RNA. This Rattus norvegicus (Rat) protein is ATP-dependent RNA helicase DDX39A (Ddx39a).